A 312-amino-acid chain; its full sequence is D-alanine--D-alanine ligase (312 aa).

Residues 108-308 (KLVWQQTGIP…YSELVVKVLS (201 aa)) enclose the ATP-grasp domain. Residue 138–193 (AAKLGVPLFVKPASEGSSVAVEKVKSADALPAALEEAAKHDKIVIVEKSIEGGGEY) coordinates ATP. Residues D262, E275, and N277 each contribute to the Mg(2+) site.

It belongs to the D-alanine--D-alanine ligase family. The cofactor is Mg(2+). It depends on Mn(2+) as a cofactor.

The protein resides in the cytoplasm. It catalyses the reaction 2 D-alanine + ATP = D-alanyl-D-alanine + ADP + phosphate + H(+). The protein operates within cell wall biogenesis; peptidoglycan biosynthesis. Its function is as follows. Cell wall formation. The sequence is that of D-alanine--D-alanine ligase from Burkholderia pseudomallei (strain 668).